Here is a 380-residue protein sequence, read N- to C-terminus: Queuine tRNA-ribosyltransferase (380 aa).

The Proton acceptor role is filled by aspartate 96. Substrate-binding positions include 96–100, aspartate 150, glutamine 193, and glycine 220; that span reads DSGGF. An RNA binding region spans residues 251–257; the sequence is GVGAPDS. Aspartate 270 functions as the Nucleophile in the catalytic mechanism. The RNA binding; important for wobble base 34 recognition stretch occupies residues 275–279; that stretch reads TRIAR. Zn(2+)-binding residues include cysteine 308, cysteine 310, cysteine 313, and histidine 339.

Belongs to the queuine tRNA-ribosyltransferase family. Homodimer. Within each dimer, one monomer is responsible for RNA recognition and catalysis, while the other monomer binds to the replacement base PreQ1. Zn(2+) serves as cofactor.

The catalysed reaction is 7-aminomethyl-7-carbaguanine + guanosine(34) in tRNA = 7-aminomethyl-7-carbaguanosine(34) in tRNA + guanine. It participates in tRNA modification; tRNA-queuosine biosynthesis. In terms of biological role, catalyzes the base-exchange of a guanine (G) residue with the queuine precursor 7-aminomethyl-7-deazaguanine (PreQ1) at position 34 (anticodon wobble position) in tRNAs with GU(N) anticodons (tRNA-Asp, -Asn, -His and -Tyr). Catalysis occurs through a double-displacement mechanism. The nucleophile active site attacks the C1' of nucleotide 34 to detach the guanine base from the RNA, forming a covalent enzyme-RNA intermediate. The proton acceptor active site deprotonates the incoming PreQ1, allowing a nucleophilic attack on the C1' of the ribose to form the product. After dissociation, two additional enzymatic reactions on the tRNA convert PreQ1 to queuine (Q), resulting in the hypermodified nucleoside queuosine (7-(((4,5-cis-dihydroxy-2-cyclopenten-1-yl)amino)methyl)-7-deazaguanosine). The chain is Queuine tRNA-ribosyltransferase from Streptococcus thermophilus (strain CNRZ 1066).